Consider the following 80-residue polypeptide: Protein FAM229B (80 aa).

The disordered stretch occupies residues 1-44 (MPFRFGTQPRRFPVEGGDSSIGLEPGLSSSATCNGKEMSPTRQL).

This sequence belongs to the FAM229 family.

This is Protein FAM229B (FAM229B) from Bos taurus (Bovine).